Here is a 375-residue protein sequence, read N- to C-terminus: MTPILFVDRDGTLITEPADYQIDAYEKLRFVDHVIPAMLKLRDAGYQFVIVSNQDGLGSESYPRASFEGPNNLMLQIFASQGIEFRDVLIDCSWPADNAPTRKPGIGLMVPYLQDRSIDWARSAMVGDRITDIQFAHNLNIRGFQLRTDEFGGEWDWPGIAHELADAPRRAVVQRNTKETRIRVELDLDRVAEPKTATGLPFFDHMLEQIGKHGGFALEIRAEGDLHIDEHHTIEDTGLALGQALREALGNKRGIGRYGFDPESSPWRVAGDKAQHGFTLPMDETIASAALDFSGRPYFVFDGEFKRERVGDMPTELVPHFFRSICDASGLNLHLTVRGENDHHKVEACFKALARALRQAIRREGTALPTTKGAL.

The interval 1-168 (MTPILFVDRD…GIAHELADAP (168 aa)) is histidinol-phosphatase. Asp-8 functions as the Nucleophile in the catalytic mechanism. Positions 8, 10, and 128 each coordinate Mg(2+). Asp-10 (proton donor) is an active-site residue. The interval 169 to 375 (RRAVVQRNTK…TALPTTKGAL (207 aa)) is imidazoleglycerol-phosphate dehydratase.

The protein in the N-terminal section; belongs to the histidinol-phosphatase family. In the C-terminal section; belongs to the imidazoleglycerol-phosphate dehydratase family. Mg(2+) is required as a cofactor.

The protein localises to the cytoplasm. It carries out the reaction D-erythro-1-(imidazol-4-yl)glycerol 3-phosphate = 3-(imidazol-4-yl)-2-oxopropyl phosphate + H2O. It catalyses the reaction L-histidinol phosphate + H2O = L-histidinol + phosphate. It participates in amino-acid biosynthesis; L-histidine biosynthesis; L-histidine from 5-phospho-alpha-D-ribose 1-diphosphate: step 6/9. It functions in the pathway amino-acid biosynthesis; L-histidine biosynthesis; L-histidine from 5-phospho-alpha-D-ribose 1-diphosphate: step 8/9. In Xanthomonas euvesicatoria pv. vesicatoria (strain 85-10) (Xanthomonas campestris pv. vesicatoria), this protein is Histidine biosynthesis bifunctional protein HisB.